A 372-amino-acid chain; its full sequence is UDP-N-acetylglucosamine 2-epimerase (372 aa).

Substrate is bound by residues R10, K15, D95, E117, H212, Q270, F275, S289–G291, E295, and R312.

The protein belongs to the UDP-N-acetylglucosamine 2-epimerase family.

It carries out the reaction UDP-N-acetyl-alpha-D-glucosamine = UDP-N-acetyl-alpha-D-mannosamine. It participates in capsule biogenesis; capsule polysaccharide biosynthesis. Activated by UDP-GlcNAc and inhibited by 2-acetamidoglucal and UDP. Activity is strongly decreased in the presence of Co(2+) and abolished in the presence of Mn(2+) or Zn(2+). Functionally, catalyzes the interconversion between UDP-N-acetylglucosamine (UDP-GlcNAc) and UDP-N-acetylmannosamine (UDP-ManNAc). Involved in the biosynthesis of the capsular polysaccharides. In vitro, can also use several chemoenzymatically synthesized UDP-ManNAc derivatives as substrates, with lower efficiency. The protein is UDP-N-acetylglucosamine 2-epimerase of Neisseria meningitidis serogroup A / serotype 4A (strain DSM 15465 / Z2491).